The following is a 1068-amino-acid chain: Sucrose-phosphate synthase (1068 aa).

Disordered stretches follow at residues 18–47 (HTSS…GAHM) and 118–139 (KEQE…SEGE). Gly residues predominate over residues 23-32 (GAGGGGGGGD). The span at 118–128 (KEQEQVRREAT) shows a compositional bias: basic and acidic residues.

The protein belongs to the glycosyltransferase 1 family. In terms of assembly, homodimer or homotetramer.

The catalysed reaction is beta-D-fructose 6-phosphate + UDP-alpha-D-glucose = sucrose 6(F)-phosphate + UDP + H(+). The protein operates within glycan biosynthesis; sucrose biosynthesis; sucrose from D-fructose 6-phosphate and UDP-alpha-D-glucose: step 1/2. Its activity is regulated as follows. Activity is regulated by phosphorylation and moderated by concentration of metabolites and light. In terms of biological role, plays a role in photosynthetic sucrose synthesis by catalyzing the rate-limiting step of sucrose biosynthesis from UDP-glucose and fructose- 6-phosphate. Involved in the regulation of carbon partitioning in the leaves of plants. May regulate the synthesis of sucrose and therefore play a major role as a limiting factor in the export of photoassimilates out of the leaf. Plays a role for sucrose availability that is essential for plant growth and fiber elongation. The chain is Sucrose-phosphate synthase from Zea mays (Maize).